Reading from the N-terminus, the 453-residue chain is Serine protease HTRA3 (453 aa).

A signal peptide spans 1–17; the sequence is MQARALLLAALAALALA. In terms of domain architecture, IGFBP N-terminal spans 21-84; that stretch reads PAAPCPARCD…ECVRGLCRCR (64 aa). 8 disulfide bridges follow: cysteine 25/cysteine 48, cysteine 29/cysteine 50, cysteine 34/cysteine 51, cysteine 39/cysteine 54, cysteine 62/cysteine 76, cysteine 70/cysteine 81, cysteine 83/cysteine 101, and cysteine 90/cysteine 126. Positions 64 to 128 constitute a Kazal-like domain; that stretch reads GPLDSPCGES…RQLQKGACPL (65 aa). The serine protease stretch occupies residues 175 to 340; sequence GSGFIMSEAG…AIPSDRITRF (166 aa). Residues histidine 191, aspartate 227, and serine 305 each act as charge relay system in the active site. The PDZ domain occupies 359 to 444; sequence IRMRTITPSL…EVRRGNDDLL (86 aa).

The protein belongs to the peptidase S1C family. As to quaternary structure, homotrimer. Interacts with TGFB1; the interaction inhibits TGFB-mediated signaling. Interacts with BMP4; the interaction inhibits BMP4-mediated signaling. Interacts with TGFB2 and GDF5. Interacts with MYH9. As to expression, widely expressed, with highest levels in both adult and fetal heart, ovary, uterus placenta, and bladder. In the endometrium, expressed in epithelial glands and the stroma. Also present in leukocytes. Isoform 1 is predominant in heart and skeletal muscle, whereas isoform 2 is predominant in placenta and kidney.

Its subcellular location is the secreted. Serine protease that cleaves beta-casein/CSN2 as well as several extracellular matrix (ECM) proteoglycans such as decorin/DCN, biglycan/BGN and fibronectin/FN1. Inhibits signaling mediated by TGF-beta family proteins possibly indirectly by degradation of these ECM proteoglycans. May act as a tumor suppressor. Negatively regulates, in vitro, trophoblast invasion during placental development and may be involved in the development of the placenta in vivo. May also have a role in ovarian development, granulosa cell differentiation and luteinization. This is Serine protease HTRA3 (HTRA3) from Homo sapiens (Human).